The chain runs to 380 residues: Queuine tRNA-ribosyltransferase (380 aa).

Aspartate 96 functions as the Proton acceptor in the catalytic mechanism. Residues 96-100, aspartate 150, glutamine 193, and glycine 220 contribute to the substrate site; that span reads DSGGF. Positions 251 to 257 are RNA binding; that stretch reads GVGAPDS. The active-site Nucleophile is aspartate 270. The interval 275 to 279 is RNA binding; important for wobble base 34 recognition; sequence TRIAR. Zn(2+) contacts are provided by cysteine 308, cysteine 310, cysteine 313, and histidine 339.

This sequence belongs to the queuine tRNA-ribosyltransferase family. In terms of assembly, homodimer. Within each dimer, one monomer is responsible for RNA recognition and catalysis, while the other monomer binds to the replacement base PreQ1. It depends on Zn(2+) as a cofactor.

It catalyses the reaction 7-aminomethyl-7-carbaguanine + guanosine(34) in tRNA = 7-aminomethyl-7-carbaguanosine(34) in tRNA + guanine. It participates in tRNA modification; tRNA-queuosine biosynthesis. Its function is as follows. Catalyzes the base-exchange of a guanine (G) residue with the queuine precursor 7-aminomethyl-7-deazaguanine (PreQ1) at position 34 (anticodon wobble position) in tRNAs with GU(N) anticodons (tRNA-Asp, -Asn, -His and -Tyr). Catalysis occurs through a double-displacement mechanism. The nucleophile active site attacks the C1' of nucleotide 34 to detach the guanine base from the RNA, forming a covalent enzyme-RNA intermediate. The proton acceptor active site deprotonates the incoming PreQ1, allowing a nucleophilic attack on the C1' of the ribose to form the product. After dissociation, two additional enzymatic reactions on the tRNA convert PreQ1 to queuine (Q), resulting in the hypermodified nucleoside queuosine (7-(((4,5-cis-dihydroxy-2-cyclopenten-1-yl)amino)methyl)-7-deazaguanosine). This chain is Queuine tRNA-ribosyltransferase, found in Streptococcus pneumoniae (strain Taiwan19F-14).